The following is a 59-amino-acid chain: Small ribosomal subunit protein bS21 (59 aa).

The interval 34–59 (KHEHYEKPSVKRKKKSEAARRRKRSF) is disordered. Residues 43 to 59 (VKRKKKSEAARRRKRSF) are compositionally biased toward basic residues.

Belongs to the bacterial ribosomal protein bS21 family.

This Desulforudis audaxviator (strain MP104C) protein is Small ribosomal subunit protein bS21.